Here is a 419-residue protein sequence, read N- to C-terminus: C2 calcium-dependent domain-containing protein 4C (419 aa).

4 disordered regions span residues 1–96 (MRKT…LASE), 115–136 (EDWT…MSLP), 151–225 (AESP…SPFG), and 247–300 (VSQL…HTVK). The span at 75–94 (LASPGPRRAPRSPRLPAKLA) shows a compositional bias: low complexity. The segment covering 186-196 (KGNGGDGGSRE) has biased composition (gly residues). Over residues 212 to 225 (ESDTGSSAESSPFG) the composition is skewed to polar residues. Phosphoserine is present on residues Ser259, Ser261, and Ser270. The C2 domain occupies 303 to 419 (TRGSVRLLAE…LPLTSLLPFL (117 aa)).

The protein belongs to the C2CD4 family.

The protein is C2 calcium-dependent domain-containing protein 4C (C2cd4c) of Mus musculus (Mouse).